A 51-amino-acid polypeptide reads, in one-letter code: Insulin (51 aa).

3 disulfide bridges follow: cysteine 8–cysteine 37, cysteine 20–cysteine 50, and cysteine 36–cysteine 41.

It belongs to the insulin family. As to quaternary structure, heterodimer of a B chain and an A chain linked by two disulfide bonds.

It localises to the secreted. Insulin decreases blood glucose concentration. It increases cell permeability to monosaccharides, amino acids and fatty acids. It accelerates glycolysis, the pentose phosphate cycle, and glycogen synthesis in liver. In Gadus morhua subsp. callarias (Baltic cod), this protein is Insulin (ins).